A 1622-amino-acid polypeptide reads, in one-letter code: ABC transporter C family member 1 (1622 aa).

Helical transmembrane passes span 37–57 (FVLG…LWLI), 73–93 (FSYF…FRLV), 110–130 (EAFM…MTVV), 145–165 (FAVI…LSVK), 174–194 (YLYI…FVYF), 336–356 (AWIG…GVLC), 440–460 (VASI…TVII), 527–547 (FILN…FSLL), and 557–577 (FTSL…PNII). The ABC transmembrane type-1 1 domain occupies 302–582 (FWWGGFWKIG…LPNIITQMVN (281 aa)). Residues 614 to 838 (ISIRNGYFSW…GPLFQRLMEN (225 aa)) enclose the ABC transporter 1 domain. Position 649-656 (649-656 (GSTGEGKT)) interacts with ATP. A disordered region spans residues 852 to 876 (AEVDQTSVKPVENGNANNLQKDGIE). Over residues 855-871 (DQTSVKPVENGNANNLQ) the composition is skewed to polar residues. 6 helical membrane passes run 909 to 929 (ALGG…TQVF), 951 to 971 (PLFY…VTLI), 1027 to 1049 (AVFV…LIGI), 1053 to 1072 (LSLW…YLYY), 1138 to 1158 (LGIR…SLAV), and 1172 to 1192 (STMG…TAVL). Residues 916–1200 (VMMLVICYVL…VLRLASLAEN (285 aa)) enclose the ABC transmembrane type-1 2 domain. An interaction with calmodulin and FKP42/TWD1 region spans residues 1231-1246 (WPSSGSIKFEDVVLRY). The 235-residue stretch at 1237-1471 (IKFEDVVLRY…GESSFSKMVQ (235 aa)) folds into the ABC transporter 2 domain. 1271–1278 (GRTGAGKS) serves as a coordination point for ATP.

The protein belongs to the ABC transporter superfamily. ABCC family. Conjugate transporter (TC 3.A.1.208) subfamily. As to quaternary structure, interacts with calmodulin (CaM), PAS1 and FKBP42/TWD1. As to expression, ubiquitous, with higher levels in leaves and stems and lower levels in roots. Localized in the root apex, root hair tips and root epidermis.

The protein resides in the vacuole membrane. The enzyme catalyses ATP + H2O + xenobioticSide 1 = ADP + phosphate + xenobioticSide 2.. Its function is as follows. Pump for glutathione S-conjugates. Mediates the transport of S-(2,4-dinitrophenyl)-glutathione (DNP-GS), GSSG, cyanidin 3-glucoside-GS (C3G-GS) and metolachlor-GS (MOC-GS). The polypeptide is ABC transporter C family member 1 (ABCC1) (Arabidopsis thaliana (Mouse-ear cress)).